Consider the following 553-residue polypeptide: Phospholipase B (553 aa).

Residues methionine 1–arginine 35 form the signal peptide. N-linked (GlcNAc...) asparagine glycans are attached at residues asparagine 313, asparagine 416, and asparagine 531.

Belongs to the phospholipase B-like family. Expressed by the venom gland.

It localises to the secreted. Functionally, may cause hemolysis or may be involved in protein folding and translation. This Crotalus adamanteus (Eastern diamondback rattlesnake) protein is Phospholipase B.